A 98-amino-acid chain; its full sequence is Large ribosomal subunit protein eL14 (98 aa).

Belongs to the eukaryotic ribosomal protein eL14 family.

The polypeptide is Large ribosomal subunit protein eL14 (Hyperthermus butylicus (strain DSM 5456 / JCM 9403 / PLM1-5)).